Consider the following 291-residue polypeptide: ATP synthase gamma chain (291 aa).

This sequence belongs to the ATPase gamma chain family. F-type ATPases have 2 components, CF(1) - the catalytic core - and CF(0) - the membrane proton channel. CF(1) has five subunits: alpha(3), beta(3), gamma(1), delta(1), epsilon(1). CF(0) has three main subunits: a, b and c.

Its subcellular location is the cell inner membrane. In terms of biological role, produces ATP from ADP in the presence of a proton gradient across the membrane. The gamma chain is believed to be important in regulating ATPase activity and the flow of protons through the CF(0) complex. The protein is ATP synthase gamma chain of Ruegeria pomeroyi (strain ATCC 700808 / DSM 15171 / DSS-3) (Silicibacter pomeroyi).